Here is a 292-residue protein sequence, read N- to C-terminus: Zinc finger protein OZF (292 aa).

10 consecutive C2H2-type zinc fingers follow at residues 16 to 38 (FACKVCGKLFSHKSNLTEHEHFH), 44 to 66 (FECNECGKAFSQKQYVIKHQSTH), 72 to 94 (FECSDCGKAFSQKENLLTHQKIH), 100 to 122 (FECKDCGKAFIQKSNLIRHQRTH), 128 to 150 (FICKECGKTFSGKSNLTEHEKIH), 156 to 178 (FKCNECGTAFGQKKYLIKHQNIH), 184 to 206 (YECNECGKAFSQRTSLIVHVRIH), 212 to 234 (YECNVCGKAFSQSSSLTVHVRSH), 240 to 262 (YGCNECGKAFSQFSTLALHLRIH), and 268 to 290 (YQCSECGKAFSQKSHHIRHQKIH). Residues Lys-28, Lys-51, and Lys-56 each participate in a glycyl lysine isopeptide (Lys-Gly) (interchain with G-Cter in SUMO2) cross-link. Glycyl lysine isopeptide (Lys-Gly) (interchain with G-Cter in SUMO) cross-links involve residues Lys-157 and Lys-169. A Glycyl lysine isopeptide (Lys-Gly) (interchain with G-Cter in SUMO2) cross-link involves residue Lys-173. The tract at residues 212 to 292 (YECNVCGKAF…HIRHQKIHTH (81 aa)) is interaction with TERF2IP.

The protein belongs to the krueppel C2H2-type zinc-finger protein family. Binds DNA. Interacts with SUMO conjugating enzyme UBC9/UBE2I. Interacts with the telomeric protein TERF2IP. Expressed in heart, brain, liver, lung, skeletal muscle and kidney, and at much lower level in spleen and testicle. Expressed in lactating mammary gland.

The protein resides in the nucleus. The protein is Zinc finger protein OZF (Znf146) of Mus musculus (Mouse).